We begin with the raw amino-acid sequence, 403 residues long: Octaketide synthase 2 (403 aa).

Residue cysteine 174 is part of the active site. Residues serine 281 and 318 to 321 contribute to the CoA site; that span reads GGRA.

The protein belongs to the thiolase-like superfamily. Chalcone/stilbene synthases family. Homodimer.

It functions in the pathway secondary metabolite biosynthesis; flavonoid biosynthesis. Catalyzes the iterative condensations of 8 molecules of malonyl-CoA to produce aromatic octaketides, SEK4 and SEK4b, the products of the minimal polyketide synthase for the benzoisochromanequinone actinorhodin. May be involved in the biosynthesis of the octaketide barbaloin. This Aloe arborescens (Kidachi aloe) protein is Octaketide synthase 2 (PKS4).